Consider the following 49-residue polypeptide: Large ribosomal subunit protein bL33A (49 aa).

This sequence belongs to the bacterial ribosomal protein bL33 family.

In Geobacillus kaustophilus (strain HTA426), this protein is Large ribosomal subunit protein bL33A.